The chain runs to 657 residues: Glycogen debranching enzyme (657 aa).

Asp336 functions as the Nucleophile in the catalytic mechanism. Glu371 serves as the catalytic Proton donor. The segment at 460-479 is disordered; the sequence is ANGEENRDGTNNNYSNNHGK.

Belongs to the glycosyl hydrolase 13 family.

The catalysed reaction is Hydrolysis of (1-&gt;6)-alpha-D-glucosidic linkages to branches with degrees of polymerization of three or four glucose residues in limit dextrin.. It functions in the pathway glycan degradation; glycogen degradation. Removes maltotriose and maltotetraose chains that are attached by 1,6-alpha-linkage to the limit dextrin main chain, generating a debranched limit dextrin. The polypeptide is Glycogen debranching enzyme (Escherichia coli O81 (strain ED1a)).